The sequence spans 118 residues: Class I hydrophobin hum2 (118 aa).

The signal sequence occupies residues 1 to 19; that stretch reads MQFKTIFATLAAFAAVASA. Intrachain disulfides connect C33-C98, C40-C92, C41-C74, and C99-C112.

Belongs to the fungal hydrophobin family. Self-assembles to form functional amyloid fibrils called rodlets. Self-assembly into fibrillar rodlets occurs spontaneously at hydrophobic:hydrophilic interfaces and the rodlets further associate laterally to form amphipathic monolayers.

It is found in the secreted. The protein resides in the cell wall. In terms of biological role, aerial growth, conidiation, and dispersal of filamentous fungi in the environment rely upon a capability of their secreting small amphipathic proteins called hydrophobins (HPBs) with low sequence identity. Class I can self-assemble into an outermost layer of rodlet bundles on aerial cell surfaces, conferring cellular hydrophobicity that supports fungal growth, development and dispersal; whereas Class II form highly ordered films at water-air interfaces through intermolecular interactions but contribute nothing to the rodlet structure. Hum2 is a class I hydrophobin which that plays a role in, but seems not to be crucial for the formation of aerial hyphae. Hydrophobins of Mycosarcoma maydis have been functionally replaced, at least partially, by repellents. This chain is Class I hydrophobin hum2, found in Mycosarcoma maydis (Corn smut fungus).